Here is a 1857-residue protein sequence, read N- to C-terminus: U3 small nucleolar RNA-associated protein 10 (1857 aa).

The helical transmembrane segment at 267-287 threads the bilayer; it reads LTAYSIISVLSSLVPLSADLV. The stretch at 1817-1855 is one HEAT repeat; the sequence is LIPYIAELLEDDDEEVELEVRNGLVRVIENVLGEPLDRY.

This sequence belongs to the HEATR1/UTP10 family. In terms of assembly, component of the ribosomal small subunit (SSU) processome.

It is found in the nucleus. It localises to the nucleolus. The protein localises to the membrane. In terms of biological role, involved in nucleolar processing of pre-18S ribosomal RNA. Involved in ribosome biosynthesis. The chain is U3 small nucleolar RNA-associated protein 10 from Debaryomyces hansenii (strain ATCC 36239 / CBS 767 / BCRC 21394 / JCM 1990 / NBRC 0083 / IGC 2968) (Yeast).